The primary structure comprises 161 residues: Globin CTT-VIIB-3 (161 aa).

Residues 1–16 (MKFFAVLALCIVGAIA) form the signal peptide. In terms of domain architecture, Globin spans 18-161 (PLTADEASLV…NTYAIVVPRL (144 aa)). The heme b site is built by His-76 and His-111.

This sequence belongs to the globin family. As to quaternary structure, homodimer.

In Chironomus thummi thummi (Midge), this protein is Globin CTT-VIIB-3 (CTT-7B3).